The sequence spans 78 residues: D-alanyl carrier protein (78 aa).

The 77-residue stretch at 1 to 77 (MAVKEEVVEI…KVIAKVESLI (77 aa)) folds into the Carrier domain. Ser35 bears the O-(pantetheine 4'-phosphoryl)serine mark.

Belongs to the DltC family. 4'-phosphopantetheine is transferred from CoA to a specific serine of apo-DCP.

It localises to the cytoplasm. The protein operates within cell wall biogenesis; lipoteichoic acid biosynthesis. Carrier protein involved in the D-alanylation of lipoteichoic acid (LTA). The loading of thioester-linked D-alanine onto DltC is catalyzed by D-alanine--D-alanyl carrier protein ligase DltA. The DltC-carried D-alanyl group is further transferred to cell membrane phosphatidylglycerol (PG) by forming an ester bond, probably catalyzed by DltD. D-alanylation of LTA plays an important role in modulating the properties of the cell wall in Gram-positive bacteria, influencing the net charge of the cell wall. The sequence is that of D-alanyl carrier protein from Leuconostoc citreum (strain KM20).